Reading from the N-terminus, the 227-residue chain is Cytochrome c oxidase subunit 2 (227 aa).

The Mitochondrial intermembrane segment spans residues 1-26 (MATWSNLSLQDGASPLMEQLSFFHDH). Residues 27–48 (TMIDLLLITMIVGYSLSYMLLT) form a helical membrane-spanning segment. Over 49 to 62 (KYTNRNMLHGHLIE) the chain is Mitochondrial matrix. A helical transmembrane segment spans residues 63–82 (TIWTALPAITLIFIALPSLR). Residues 83-227 (LLYLLDDSSD…LFIKWLSNMM (145 aa)) lie on the Mitochondrial intermembrane side of the membrane. Cu cation-binding residues include His161, Cys196, Glu198, Cys200, His204, and Met207. A Mg(2+)-binding site is contributed by Glu198.

This sequence belongs to the cytochrome c oxidase subunit 2 family. As to quaternary structure, component of the cytochrome c oxidase (complex IV, CIV), a multisubunit enzyme composed of a catalytic core of 3 subunits and several supernumerary subunits. The complex exists as a monomer or a dimer and forms supercomplexes (SCs) in the inner mitochondrial membrane with ubiquinol-cytochrome c oxidoreductase (cytochrome b-c1 complex, complex III, CIII). The cofactor is Cu cation.

It is found in the mitochondrion inner membrane. The enzyme catalyses 4 Fe(II)-[cytochrome c] + O2 + 8 H(+)(in) = 4 Fe(III)-[cytochrome c] + 2 H2O + 4 H(+)(out). In terms of biological role, component of the cytochrome c oxidase, the last enzyme in the mitochondrial electron transport chain which drives oxidative phosphorylation. The respiratory chain contains 3 multisubunit complexes succinate dehydrogenase (complex II, CII), ubiquinol-cytochrome c oxidoreductase (cytochrome b-c1 complex, complex III, CIII) and cytochrome c oxidase (complex IV, CIV), that cooperate to transfer electrons derived from NADH and succinate to molecular oxygen, creating an electrochemical gradient over the inner membrane that drives transmembrane transport and the ATP synthase. Cytochrome c oxidase is the component of the respiratory chain that catalyzes the reduction of oxygen to water. Electrons originating from reduced cytochrome c in the intermembrane space (IMS) are transferred via the dinuclear copper A center (CU(A)) of subunit 2 and heme A of subunit 1 to the active site in subunit 1, a binuclear center (BNC) formed by heme A3 and copper B (CU(B)). The BNC reduces molecular oxygen to 2 water molecules using 4 electrons from cytochrome c in the IMS and 4 protons from the mitochondrial matrix. This is Cytochrome c oxidase subunit 2 (COII) from Locusta migratoria (Migratory locust).